The following is a 424-amino-acid chain: Putative polyketide beta-ketoacyl synthase 2 (424 aa).

One can recognise a Ketosynthase family 3 (KS3) domain in the interval 13–416; the sequence is SRRAVVTGLG…GSNSALVLRR (404 aa).

It belongs to the thiolase-like superfamily. Beta-ketoacyl-ACP synthases family.

Involved in developmentally regulated synthesis of a compound biosynthetically related to polyketide antibiotics which is essential for spore color in Streptomyces coelicolor. The polypeptide is Putative polyketide beta-ketoacyl synthase 2 (Streptomyces coelicolor (strain ATCC BAA-471 / A3(2) / M145)).